The chain runs to 305 residues: Aquaporin NIP6-1 (305 aa).

The segment at 1 to 30 (MDHEEIPSTPSTPATTPGTPGAPLFGGFEG) is disordered. Positions 7–23 (PSTPSTPATTPGTPGAP) are enriched in low complexity. 2 helical membrane passes run 82-102 (LGAE…TAIV) and 111-131 (TLIG…LSTG). The NPA 1 signature appears at 139 to 141 (NPA). 3 helical membrane-spanning segments follow: residues 159–179 (VYIG…KAVF), 194–214 (LSQA…VVTA), and 221–241 (AVGE…ILIA). An NPA 2 motif is present at residues 250-252 (NPV). A helical transmembrane segment spans residues 267 to 287 (IWVYLTAPILGALIGAGTYTI). Position 302 is a phosphoserine (serine 302).

The protein belongs to the MIP/aquaporin (TC 1.A.8) family. NIP (TC 1.A.8.12) subfamily. In terms of tissue distribution, expressed in roots.

The protein resides in the membrane. Transports glycerol, urea and formamide, in Xenopus laevis oocytes. Very low water transport activity. This is Aquaporin NIP6-1 (NIP6-1) from Arabidopsis thaliana (Mouse-ear cress).